Here is a 605-residue protein sequence, read N- to C-terminus: Xylan O-acetyltransferase 7 (605 aa).

The Cytoplasmic portion of the chain corresponds to 1-124 (MKKKKNGMGA…AKQPSPRRTP (124 aa)). The disordered stretch occupies residues 86–126 (PCHLLPIQGQGQMQMQQRRKPPPAAAPVAAKQPSPRRTPGP). The chain crosses the membrane as a helical; Signal-anchor for type II membrane protein span at residues 125 to 145 (GPLSFAGALLSLLVVATFLYI). Residues 146–605 (NDHGNMMPPH…LYAHIVAHAA (460 aa)) are Lumenal-facing. 2 N-linked (GlcNAc...) asparagine glycosylation sites follow: Asn-192 and Asn-218. 4 disulfides stabilise this stretch: Cys-243–Cys-296, Cys-267–Cys-332, Cys-276–Cys-584, and Cys-499–Cys-580. The GDS motif motif lies at 319–321 (GDS). The active-site Nucleophile is the Ser-321. Residues Asn-351, Asn-363, Asn-471, and Asn-508 are each glycosylated (N-linked (GlcNAc...) asparagine). Catalysis depends on Asp-579, which acts as the Proton donor. Residues 579–582 (DCIH) carry the DXXH motif motif. The Proton acceptor role is filled by His-582.

Belongs to the PC-esterase family. TBL subfamily. In terms of tissue distribution, expressed in roots, leaves and stems.

The protein localises to the golgi apparatus membrane. In terms of biological role, xylan acetyltransferase required for 2-O- and 3-O-monoacetylation of xylosyl residues in xylan. Catalyzes the 2-O-acetylation of xylan, followed by nonenzymatic acetyl migration to the O-3 position, resulting in products that are monoacetylated at both O-2 and O-3 positions. The protein is Xylan O-acetyltransferase 7 of Oryza sativa subsp. japonica (Rice).